Here is a 431-residue protein sequence, read N- to C-terminus: Adenylosuccinate synthetase (431 aa).

GTP contacts are provided by residues G13–K19 and G41–T43. The active-site Proton acceptor is D14. Positions 14 and 41 each coordinate Mg(2+). IMP contacts are provided by residues D14–K17, N39–H42, T130, R144, Q225, T240, and R304. Residue H42 is the Proton donor of the active site. A300 to R306 serves as a coordination point for substrate. Residues R306, K332–D334, and S415–G417 each bind GTP.

This sequence belongs to the adenylosuccinate synthetase family. In terms of assembly, homodimer. Mg(2+) serves as cofactor.

The protein localises to the cytoplasm. The catalysed reaction is IMP + L-aspartate + GTP = N(6)-(1,2-dicarboxyethyl)-AMP + GDP + phosphate + 2 H(+). It functions in the pathway purine metabolism; AMP biosynthesis via de novo pathway; AMP from IMP: step 1/2. Plays an important role in the de novo pathway of purine nucleotide biosynthesis. Catalyzes the first committed step in the biosynthesis of AMP from IMP. The sequence is that of Adenylosuccinate synthetase from Legionella pneumophila subsp. pneumophila (strain Philadelphia 1 / ATCC 33152 / DSM 7513).